The primary structure comprises 233 residues: LexA repressor (233 aa).

The H-T-H motif DNA-binding region spans 26–46; it reads FEEMKEALDLKSKSGVHRLIS. Active-site for autocatalytic cleavage activity residues include Ser153 and Lys191.

It belongs to the peptidase S24 family. Homodimer.

The catalysed reaction is Hydrolysis of Ala-|-Gly bond in repressor LexA.. Functionally, represses a number of genes involved in the response to DNA damage (SOS response), including recA and lexA. In the presence of single-stranded DNA, RecA interacts with LexA causing an autocatalytic cleavage which disrupts the DNA-binding part of LexA, leading to derepression of the SOS regulon and eventually DNA repair. In Erythrobacter litoralis (strain HTCC2594), this protein is LexA repressor.